The chain runs to 482 residues: Tripartite motif-containing protein 10 (482 aa).

The RING-type zinc finger occupies 16-61 (CPICQGTLREPVTIDCGHNFCCVCLTRYLEIPCLDPGELPTCPLCK). The B box-type zinc-finger motif lies at 95–136 (EEEDVCLEHREKVYYFCEDDEMQLCVVCREAWEHRHHTVRFL). C100, H103, C122, and H128 together coordinate Zn(2+). The B30.2/SPRY domain maps to 293-482 (REMKTFLEKL…GRGSKFSLSS (190 aa)).

This sequence belongs to the TRIM/RBCC family. In terms of assembly, interacts with IFNAR1; this interaction prevents association of IFNAR1 with TYK2.

The protein localises to the cytoplasm. Functionally, E3 ligase that plays an essential role in the differentiation and survival of terminal erythroid cells. May directly bind to PTEN and promote its ubiquitination, resulting in its proteasomal degradation and activation of hypertrophic signaling. In addition, plays a role in immune response regulation by repressing the phosphorylation of STAT1 and STAT2 in the interferon/JAK/STAT signaling pathway independent of its E3 ligase activity. Mechanistically, interacts with the intracellular domain of IFNAR1 and thereby inhibits the association of TYK2 and IFNAR1. The chain is Tripartite motif-containing protein 10 (TRIM10) from Sus scrofa (Pig).